Consider the following 100-residue polypeptide: Small ribosomal subunit protein uS14c (100 aa).

It belongs to the universal ribosomal protein uS14 family. In terms of assembly, part of the 30S ribosomal subunit.

Its subcellular location is the plastid. It is found in the chloroplast. Functionally, binds 16S rRNA, required for the assembly of 30S particles. The chain is Small ribosomal subunit protein uS14c from Chlamydomonas reinhardtii (Chlamydomonas smithii).